A 265-amino-acid chain; its full sequence is Type III pantothenate kinase (265 aa).

9–16 (DAGNSRIK) contacts ATP. Substrate contacts are provided by residues Tyr-96 and 103–106 (GSDR). The Proton acceptor role is filled by Asp-105. Thr-129 serves as a coordination point for ATP. A substrate-binding site is contributed by Thr-189.

This sequence belongs to the type III pantothenate kinase family. Homodimer. It depends on NH4(+) as a cofactor. The cofactor is K(+).

The protein localises to the cytoplasm. It catalyses the reaction (R)-pantothenate + ATP = (R)-4'-phosphopantothenate + ADP + H(+). It participates in cofactor biosynthesis; coenzyme A biosynthesis; CoA from (R)-pantothenate: step 1/5. Functionally, catalyzes the phosphorylation of pantothenate (Pan), the first step in CoA biosynthesis. The polypeptide is Type III pantothenate kinase (Burkholderia orbicola (strain AU 1054)).